The sequence spans 314 residues: tRNA dimethylallyltransferase 1 (314 aa).

8–15 is a binding site for ATP; that stretch reads GPTGTGKS. 10 to 15 contributes to the substrate binding site; it reads TGTGKS.

It belongs to the IPP transferase family. In terms of assembly, monomer. The cofactor is Mg(2+).

It carries out the reaction adenosine(37) in tRNA + dimethylallyl diphosphate = N(6)-dimethylallyladenosine(37) in tRNA + diphosphate. Functionally, catalyzes the transfer of a dimethylallyl group onto the adenine at position 37 in tRNAs that read codons beginning with uridine, leading to the formation of N6-(dimethylallyl)adenosine (i(6)A). In Mycobacterium marinum (strain ATCC BAA-535 / M), this protein is tRNA dimethylallyltransferase 1.